We begin with the raw amino-acid sequence, 223 residues long: Ribonuclease 3 (223 aa).

Residues 4 to 127 form the RNase III domain; that stretch reads LNRLEEHLGY…LMGAIYLESG (124 aa). Glu40 serves as a coordination point for Mg(2+). Asp44 is an active-site residue. Residues Asp113 and Glu116 each coordinate Mg(2+). Glu116 is a catalytic residue. Residues 154-223 enclose the DRBM domain; sequence DYKTTLQEIT…AWKVLQGMNI (70 aa).

Belongs to the ribonuclease III family. As to quaternary structure, homodimer. Mg(2+) serves as cofactor.

It localises to the cytoplasm. It carries out the reaction Endonucleolytic cleavage to 5'-phosphomonoester.. In terms of biological role, digests double-stranded RNA. Involved in the processing of primary rRNA transcript to yield the immediate precursors to the large and small rRNAs (23S and 16S). Processes some mRNAs, and tRNAs when they are encoded in the rRNA operon. Processes pre-crRNA and tracrRNA of type II CRISPR loci if present in the organism. This chain is Ribonuclease 3, found in Campylobacter fetus subsp. fetus (strain 82-40).